The primary structure comprises 541 residues: Carotenoid-cleaving dioxygenase, mitochondrial (541 aa).

Residues histidine 188, histidine 248, histidine 319, and histidine 535 each coordinate Fe cation.

This sequence belongs to the carotenoid oxygenase family. Fe(2+) is required as a cofactor. In terms of tissue distribution, widely expressed. Detected in heart, spleen, lung, intestine, colon, stomach, kidney, bladder, and prostate. Highly expressed in liver and testis (at protein level).

It is found in the mitochondrion. It carries out the reaction all-trans-beta-carotene + O2 = beta-ionone + all-trans-10'-apo-beta-carotenal. It catalyses the reaction 5-cis-lycopene + O2 = 5-cis-10'-apo-lycopenal + (3E,5E)-6,10-dimethylundeca-3,5,9-trien-2-one. The enzyme catalyses 13-cis-lycopene + O2 = 13-cis-10'-apo-lycopenal + (3E,5E)-6,10-dimethylundeca-3,5,9-trien-2-one. The catalysed reaction is lutein + O2 = (3R,6R)-hydroxy-alpha-ionone + (3R)-3-hydroxy-10'-apo-beta-carotenal. It carries out the reaction lutein + O2 = (3R,6R)-3-hydroxy-10'-apo-alpha-carotenal + (3R)-hydroxy-beta-ionone. It catalyses the reaction all-trans-zeaxanthin + 2 O2 = 4,9-dimethyldodeca-2,4,6,8,10-pentaenedial + 2 (3R)-hydroxy-beta-ionone. The enzyme catalyses all-trans-zeaxanthin + O2 = (3R)-3-hydroxy-10'-apo-beta-carotenal + (3R)-hydroxy-beta-ionone. The catalysed reaction is beta-cryptoxanthin + O2 = all-trans-10'-apo-beta-carotenal + (3R)-hydroxy-beta-ionone. It carries out the reaction all-trans-10'-apo-beta-carotenal + O2 = beta-ionone + 4,9-dimethyldodeca-2,4,6,8,10-pentaenedial. It catalyses the reaction (3R)-3-hydroxy-10'-apo-beta-carotenal + O2 = 4,9-dimethyldodeca-2,4,6,8,10-pentaenedial + (3R)-hydroxy-beta-ionone. The enzyme catalyses (3R,6R)-3-hydroxy-10'-apo-alpha-carotenal + O2 = (3R,6R)-hydroxy-alpha-ionone + 4,9-dimethyldodeca-2,4,6,8,10-pentaenedial. Its function is as follows. Broad specificity mitochondrial dioxygenase that mediates the asymmetric oxidative cleavage of carotenoids. Cleaves carotenes (pure hydrocarbon carotenoids) such as all-trans-beta-carotene and lycopene as well as xanthophylls (oxygenated carotenoids) such as zeaxanthin, lutein and beta-cryptoxanthin at both the 9,10 and the 9',10' carbon-carbon double bond. Through its function in carotenoids metabolism regulates oxidative stress and the production of important signaling molecules. The protein is Carotenoid-cleaving dioxygenase, mitochondrial of Mustela putorius furo (European domestic ferret).